A 179-amino-acid polypeptide reads, in one-letter code: Large ribosomal subunit protein uL5 (179 aa).

This sequence belongs to the universal ribosomal protein uL5 family. Part of the 50S ribosomal subunit; part of the 5S rRNA/L5/L18/L25 subcomplex. Contacts the 5S rRNA and the P site tRNA. Forms a bridge to the 30S subunit in the 70S ribosome.

This is one of the proteins that bind and probably mediate the attachment of the 5S RNA into the large ribosomal subunit, where it forms part of the central protuberance. In the 70S ribosome it contacts protein S13 of the 30S subunit (bridge B1b), connecting the 2 subunits; this bridge is implicated in subunit movement. Contacts the P site tRNA; the 5S rRNA and some of its associated proteins might help stabilize positioning of ribosome-bound tRNAs. This chain is Large ribosomal subunit protein uL5, found in Staphylococcus saprophyticus subsp. saprophyticus (strain ATCC 15305 / DSM 20229 / NCIMB 8711 / NCTC 7292 / S-41).